Here is a 494-residue protein sequence, read N- to C-terminus: Cysteine--tRNA ligase (494 aa).

Cys29 is a Zn(2+) binding site. A 'HIGH' region motif is present at residues Leu31 to His41. Positions Lys187–Gly220 are disordered. Over residues Ala196 to Arg211 the composition is skewed to basic and acidic residues. Zn(2+)-binding residues include Cys230, His255, and Glu259. Residues Lys287–Ser291 carry the 'KMSKS' region motif.

It belongs to the class-I aminoacyl-tRNA synthetase family. Zn(2+) is required as a cofactor.

The protein localises to the cytoplasm. The enzyme catalyses tRNA(Cys) + L-cysteine + ATP = L-cysteinyl-tRNA(Cys) + AMP + diphosphate. The polypeptide is Cysteine--tRNA ligase (Halobacterium salinarum (strain ATCC 700922 / JCM 11081 / NRC-1) (Halobacterium halobium)).